Consider the following 612-residue polypeptide: GNEIADSTVSLVKFIKPDPDAIFSSTCFGDTVSSDPAFSIPIKQESCKNTCSSALFKGSQSANPFPFMDGSYFAFMDDKDYYSLSGILGPPVSSFGDGFEGNGFSNQSLNVAIKQETEDSSFYPENNMPSSAIVGVNSCGQSFHYRIGAQGTISLSRPLNRDQSFQNLSSFPPMSSLVESWKTQSELAQNTLSSRRNDGFPVPGYIPENMSSTTLRSMSTGPSRPSKVCLVCGDEASGCHYGVVTCGSCKVFFKRAVEGKCSRQHSYLCAGRNDCIIDKIRRKNCPACRLQKCLQAGMNLGARKSKKLGKLKGVHEEHPQQPLQQTPTASPKEDTTLTSSSKEPSANSNSLVPLISAVSPAITLSAAVILENIEPEIVYAGYDNTQPDTAENLLSSLNQLAGKQMVQVVKWAKVIPGFRNLPLEDQITLIQYSWMCLSSFALSWRSYKHASSQFLYFAPDLIFNEERMRQSAMYDLCQGMQQISLEFSRLQLTFEEYTLMKVLLLLSTVPKDGLKCQAAFEEMRVNYIKELRKVLLKSPHNSGQSWQRYFQLTKLLDSMQDLVGDLLEFCFYTFRESQALKVEFPAMLVEIISDQLPKVESGIAKPLYFHRK.

Residues 1–228 (GNEIADSTVS…STGPSRPSKV (228 aa)) form a modulating region. 8 residues coordinate Zn(2+): C229, C232, C246, C249, C269, C275, C285, and C288. NR C4-type zinc fingers lie at residues 229-249 (CLVC…CGSC) and 269-293 (CAGR…LQKC). Positions 229–298 (CLVCGDEASG…RLQKCLQAGM (70 aa)) form a DNA-binding region, nuclear receptor. The tract at residues 299 to 349 (NLGARKSKKLGKLKGVHEEHPQQPLQQTPTASPKEDTTLTSSSKEPSANSN) is hinge. The segment at 310-348 (KLKGVHEEHPQQPLQQTPTASPKEDTTLTSSSKEPSANS) is disordered. The segment covering 339 to 348 (SSSKEPSANS) has biased composition (low complexity). In terms of domain architecture, NR LBD spans 350–592 (SLVPLISAVS…EFPAMLVEII (243 aa)). 2 residues coordinate 21-hydroxyprogesterone: N398 and Q404. Aldosterone is bound by residues N398 and Q404. 2 residues coordinate progesterone: N398 and Q404. The interval 410-413 (KWAK) is important for coactivator binding. The 21-hydroxyprogesterone site is built by R445 and T573. Residues R445 and T573 each contribute to the aldosterone site. 2 residues coordinate progesterone: R445 and T573.

Belongs to the nuclear hormone receptor family. NR3 subfamily.

The protein localises to the cytoplasm. Its subcellular location is the nucleus. Its function is as follows. Receptor for both mineralocorticoids (MC) such as aldosterone and glucocorticoids (GC) such as corticosterone or cortisol. Binds to mineralocorticoid response elements (MRE) and transactivates target genes. The effect of MC is to increase ion and water transport and thus raise extracellular fluid volume and blood pressure and lower potassium levels. The polypeptide is Mineralocorticoid receptor (nr3c2) (Xenopus laevis (African clawed frog)).